The primary structure comprises 232 residues: uncharacterized protein (232 aa).

The interval 1 to 46 is disordered; it reads MNAHNMRGPPGDLAKVVPGSRSGWNEGSRCRQADKGDGQCRNGGRD. Residues 28–46 are compositionally biased toward basic and acidic residues; the sequence is SRCRQADKGDGQCRNGGRD.

This is an uncharacterized protein from Rhizobium meliloti (Ensifer meliloti).